A 160-amino-acid chain; its full sequence is Putative UPF0479 protein YLR466C-A (160 aa).

The next 2 helical transmembrane spans lie at 39 to 59 and 136 to 156; these read IVFC…KVLQ and VPMI…ISQH.

This sequence belongs to the UPF0479 family.

The protein resides in the membrane. The polypeptide is Putative UPF0479 protein YLR466C-A (Saccharomyces cerevisiae (strain ATCC 204508 / S288c) (Baker's yeast)).